The chain runs to 70 residues: Large ribosomal subunit protein uL30 (70 aa).

Belongs to the universal ribosomal protein uL30 family. In terms of assembly, part of the 50S ribosomal subunit.

This chain is Large ribosomal subunit protein uL30, found in Renibacterium salmoninarum (strain ATCC 33209 / DSM 20767 / JCM 11484 / NBRC 15589 / NCIMB 2235).